The primary structure comprises 82 residues: Beta-insect toxin AaBTxL1 (82 aa).

The signal sequence occupies residues 1–22; sequence MMKLVLFSVIVILFSLIGSIHG. The region spanning 25-82 is the LCN-type CS-alpha/beta domain; sequence VPGNYPLDRSGKKYPCTITWKKNPSCIQICKKHGVKYGYCFDFQCWCEIFGRLKTFKI. 3 disulfide bridges follow: Cys40–Cys64, Cys50–Cys69, and Cys54–Cys71.

It belongs to the long (3 C-C) scorpion toxin superfamily. Sodium channel inhibitor family. Beta subfamily. In terms of tissue distribution, expressed by the venom gland.

It is found in the secreted. Shifts the voltage of activation of para/tipE voltage-dependent sodium channels (Nav) toward more negative potentials. The protein is Beta-insect toxin AaBTxL1 of Androctonus australis (Sahara scorpion).